The following is a 323-amino-acid chain: Fatty acid desaturase 4, chloroplastic (323 aa).

The transit peptide at 1–77 directs the protein to the chloroplast; it reads MAVSLPTKYP…PRPNREKLVV (77 aa). 2 consecutive transmembrane segments (helical) span residues 101-121 and 131-151; these read WVAA…IGGF and LAGY…HWAI. Positions 170–173 match the Histidine box-1 motif; the sequence is QGHH. The helical transmembrane segment at 204 to 224 threads the bilayer; it reads LAFNDPVFHGFVCTFAFCILF. A Histidine box-2 motif is present at residues 229 to 233; the sequence is HAWAH. The short motif at 258 to 262 is the Histidine box-3 element; that stretch reads HAEHH.

It belongs to the fatty acid desaturase CarF family. Requires Fe(2+) as cofactor.

Its subcellular location is the plastid. It localises to the chloroplast membrane. It carries out the reaction a 1-acyl-2-hexadecanoyl-glycerolipid + 2 reduced [2Fe-2S]-[ferredoxin] + O2 + 2 H(+) = a 1-acyl-2-[(3E)-hexadec-3-enoyl]-glycerolipid + 2 oxidized [2Fe-2S]-[ferredoxin] + 2 H2O. The protein operates within lipid metabolism; fatty acid metabolism. Fatty acid desaturase involved in the production of chloroplast-specific phosphatidylglycerol molecular species containing 16:1(3E). Catalyzes the formation of a trans double bond introduced close to the carboxyl group of palmitic acid, which is specifically esterified to the sn-2 glyceryl carbon of phosphatidylglycerol. The protein is Fatty acid desaturase 4, chloroplastic of Arabidopsis thaliana (Mouse-ear cress).